A 558-amino-acid polypeptide reads, in one-letter code: Dihydroxy-acid dehydratase (558 aa).

Cysteine 51 contributes to the [2Fe-2S] cluster binding site. Position 83 (aspartate 83) interacts with Mg(2+). Cysteine 124 is a binding site for [2Fe-2S] cluster. The Mg(2+) site is built by aspartate 125 and lysine 126. Residue lysine 126 is modified to N6-carboxylysine. Cysteine 196 serves as a coordination point for [2Fe-2S] cluster. Residue glutamate 447 coordinates Mg(2+). The active-site Proton acceptor is serine 473.

This sequence belongs to the IlvD/Edd family. As to quaternary structure, homodimer. Requires [2Fe-2S] cluster as cofactor. The cofactor is Mg(2+).

It catalyses the reaction (2R)-2,3-dihydroxy-3-methylbutanoate = 3-methyl-2-oxobutanoate + H2O. It carries out the reaction (2R,3R)-2,3-dihydroxy-3-methylpentanoate = (S)-3-methyl-2-oxopentanoate + H2O. Its pathway is amino-acid biosynthesis; L-isoleucine biosynthesis; L-isoleucine from 2-oxobutanoate: step 3/4. The protein operates within amino-acid biosynthesis; L-valine biosynthesis; L-valine from pyruvate: step 3/4. Functions in the biosynthesis of branched-chain amino acids. Catalyzes the dehydration of (2R,3R)-2,3-dihydroxy-3-methylpentanoate (2,3-dihydroxy-3-methylvalerate) into 2-oxo-3-methylpentanoate (2-oxo-3-methylvalerate) and of (2R)-2,3-dihydroxy-3-methylbutanoate (2,3-dihydroxyisovalerate) into 2-oxo-3-methylbutanoate (2-oxoisovalerate), the penultimate precursor to L-isoleucine and L-valine, respectively. The protein is Dihydroxy-acid dehydratase of Flavobacterium psychrophilum (strain ATCC 49511 / DSM 21280 / CIP 103535 / JIP02/86).